A 447-amino-acid chain; its full sequence is D-ribitol-5-phosphate cytidylyltransferase (447 aa).

This sequence belongs to the IspD/TarI cytidylyltransferase family. IspD subfamily. As to quaternary structure, homodimer.

It localises to the cytoplasm. The protein localises to the cytosol. The enzyme catalyses D-ribitol 5-phosphate + CTP + H(+) = CDP-L-ribitol + diphosphate. It catalyses the reaction D-ribose 5-phosphate + CTP + H(+) = CDP-D-ribose + diphosphate. It carries out the reaction D-ribulose 5-phosphate + CTP + H(+) = CDP-D-ribulose + diphosphate. It functions in the pathway protein modification; protein glycosylation. Its function is as follows. Cytidylyltransferase required for protein O-linked mannosylation. Catalyzes the formation of CDP-ribitol nucleotide sugar from D-ribitol 5-phosphate. CDP-ribitol is a substrate of FKTN during the biosynthesis of the phosphorylated O-mannosyl trisaccharide (N-acetylgalactosamine-beta-3-N-acetylglucosamine-beta-4-(phosphate-6-)mannose), a carbohydrate structure present in alpha-dystroglycan (DAG1), which is required for binding laminin G-like domain-containing extracellular proteins with high affinity. Shows activity toward other pentose phosphate sugars and mediates formation of CDP-ribulose or CDP-ribose using CTP and ribulose-5-phosphate or ribose-5-phosphate, respectively. Not involved in dolichol production. This Rattus norvegicus (Rat) protein is D-ribitol-5-phosphate cytidylyltransferase (Crppa).